The chain runs to 879 residues: Phosphoenolpyruvate carboxylase (879 aa).

Catalysis depends on residues His-138 and Lys-545.

Belongs to the PEPCase type 1 family. Mg(2+) is required as a cofactor.

The enzyme catalyses oxaloacetate + phosphate = phosphoenolpyruvate + hydrogencarbonate. In terms of biological role, forms oxaloacetate, a four-carbon dicarboxylic acid source for the tricarboxylic acid cycle. This is Phosphoenolpyruvate carboxylase (ppc) from Haemophilus influenzae (strain ATCC 51907 / DSM 11121 / KW20 / Rd).